The chain runs to 859 residues: MACRWSTKESPRWRSALLLLFLAGVYGNGALAEHSENVHISGVSTACGETPEQIRAPSGIITSPGWPSEYPAKINCSWFIRANPGEIITISFQDFDIQGSRRCNLDWLTIETYKNIESYRACGSTIPPPYISSQDHIWIRFHSDDNISRKGFRLAYFSGKSEEPNCACDQFRCGNGKCIPEAWKCNNMDECGDSSDEEICAKEANPPTAAAFQPCAYNQFQCLSRFTKVYTCLPESLKCDGNIDCLDLGDEIDCDVPTCGQWLKYFYGTFNSPNYPDFYPPGSNCTWLIDTGDHRKVILRFTDFKLDGTGYGDYVKIYDGLEENPHKLLRVLTAFDSHAPLTVVSSSGQIRVHFCADKVNAARGFNATYQVDGFCLPWEIPCGGNWGCYTEQQRCDGYWHCPNGRDETNCTMCQKEEFPCSRNGVCYPRSDRCNYQNHCPNGSDEKNCFFCQPGNFHCKNNRCVFESWVCDSQDDCGDGSDEENCPVIVPTRVITAAVIGSLICGLLLVIALGCTCKLYSLRMFERRSFETQLSRVEAELLRREAPPSYGQLIAQGLIPPVEDFPVCSPNQASVLENLRLAVRSQLGFTSVRLPMAGRSSNIWNRIFNFARSRHSGSLALVSADGDEVVPSQSTSREPERNHTHRSLFSVESDDTDTENERRDMAGASGGVAAPLPQKVPPTTAVEATVGACASSSTQSTRGGHADNGRDVTSVEPPSVSPARHQLTSALSRMTQGLRWVRFTLGRSSSLSQNQSPLRQLDNGVSGREDDDDVEMLIPISDGSSDFDVNDCSRPLLDLASDQGQGLRQPYNATNPGVRPSNRDGPCERCGIVHTAQIPDTCLEVTLKNETSDDEALLLC.

The signal sequence occupies residues 1-32 (MACRWSTKESPRWRSALLLLFLAGVYGNGALA). Over 33 to 492 (EHSENVHISG…ENCPVIVPTR (460 aa)) the chain is Extracellular. 2 disulfide bridges follow: C47–C76 and C103–C122. The CUB 1 domain maps to 47 to 159 (CGETPEQIRA…KGFRLAYFSG (113 aa)). N75 carries an N-linked (GlcNAc...) asparagine glycan. N146 carries an N-linked (GlcNAc...) asparagine glycan. 2 LDL-receptor class A domains span residues 165-201 (NCACDQFRCGNGKCIPEAWKCNNMDECGDSSDEEICA) and 214-255 (PCAY…IDCD). 7 disulfides stabilise this stretch: C166–C178, C173–C191, C185–C200, C215–C232, C222–C245, C239–C254, and C259–C285. In terms of domain architecture, CUB 2 spans 259-372 (CGQWLKYFYG…RGFNATYQVD (114 aa)). Residues N284 and N366 are each glycosylated (N-linked (GlcNAc...) asparagine). 3 consecutive LDL-receptor class A domains span residues 374–411 (FCLPWEIPCGGNWGCYTEQQRCDGYWHCPNGRDETNCT), 412–449 (MCQKEEFPCSRNGVCYPRSDRCNYQNHCPNGSDEKNCF), and 450–486 (FCQPGNFHCKNNRCVFESWVCDSQDDCGDGSDEENCP). Disulfide bonds link C375/C388, C382/C401, C395/C410, C413/C426, C420/C439, C433/C448, C451/C463, C458/C476, and C470/C485. N409 carries an N-linked (GlcNAc...) asparagine glycan. N-linked (GlcNAc...) asparagine glycosylation occurs at N441. A helical transmembrane segment spans residues 493 to 513 (VITAAVIGSLICGLLLVIALG). Residues 514-859 (CTCKLYSLRM…TSDDEALLLC (346 aa)) lie on the Cytoplasmic side of the membrane. Disordered stretches follow at residues 623-678 (ADGD…LPQK), 693-723 (ASSSTQSTRGGHADNGRDVTSVEPPSVSPAR), 748-770 (SSLSQNQSPLRQLDNGVSGREDD), and 801-823 (DQGQGLRQPYNATNPGVRPSNRD). 2 stretches are compositionally biased toward polar residues: residues 748–757 (SSLSQNQSPL) and 801–814 (DQGQGLRQPYNATN).

This sequence belongs to the LDLR family. As to quaternary structure, may interact with RACK1, ZFYVE9 and NMRK2. Widely expressed in heart, skeletal muscle, brain, lung, placenta and pancreas, but not in tissues consisting of a large number of epithelial cells, such as liver and kidney. Expressed at very low levels in a number of tumor-derived cell lines.

The protein resides in the membrane. It is found in the coated pit. Probable receptor, which may be involved in the internalization of lipophilic molecules and/or signal transduction. May act as a tumor suppressor. This chain is Low-density lipoprotein receptor-related protein 12 (LRP12), found in Homo sapiens (Human).